The sequence spans 435 residues: Histidinol dehydrogenase (435 aa).

Positions 131, 189, and 212 each coordinate NAD(+). Substrate is bound by residues Ser-238, Gln-260, and His-263. Zn(2+) contacts are provided by Gln-260 and His-263. Residues Glu-327 and His-328 each act as proton acceptor in the active site. Residues His-328, Asp-361, Glu-415, and His-420 each coordinate substrate. Asp-361 serves as a coordination point for Zn(2+). His-420 serves as a coordination point for Zn(2+).

Belongs to the histidinol dehydrogenase family. In terms of assembly, homodimer. Zn(2+) is required as a cofactor.

The enzyme catalyses L-histidinol + 2 NAD(+) + H2O = L-histidine + 2 NADH + 3 H(+). It functions in the pathway amino-acid biosynthesis; L-histidine biosynthesis; L-histidine from 5-phospho-alpha-D-ribose 1-diphosphate: step 9/9. In terms of biological role, catalyzes the sequential NAD-dependent oxidations of L-histidinol to L-histidinaldehyde and then to L-histidine. In Buchnera aphidicola subsp. Schizaphis graminum (strain Sg), this protein is Histidinol dehydrogenase (hisD).